The chain runs to 369 residues: Molybdenum import ATP-binding protein ModC (369 aa).

The ABC transporter domain occupies 7-243 (PGQAGIHARF…LDLPMAMTDD (237 aa)). Residue 41 to 48 (GQSGSGKT) coordinates ATP. The Mop domain maps to 304 to 369 (EGSILNVLAV…AQIKAVSLLA (66 aa)).

It belongs to the ABC transporter superfamily. Molybdate importer (TC 3.A.1.8) family. The complex is composed of two ATP-binding proteins (ModC), two transmembrane proteins (ModB) and a solute-binding protein (ModA).

The protein resides in the cell inner membrane. The catalysed reaction is molybdate(out) + ATP + H2O = molybdate(in) + ADP + phosphate + H(+). In terms of biological role, part of the ABC transporter complex ModABC involved in molybdenum import. Responsible for energy coupling to the transport system. The polypeptide is Molybdenum import ATP-binding protein ModC (Bordetella bronchiseptica (strain ATCC BAA-588 / NCTC 13252 / RB50) (Alcaligenes bronchisepticus)).